The chain runs to 375 residues: Growth/differentiation factor 8 (375 aa).

Residues 1 to 23 form the signal peptide; the sequence is MQKLQIYVYIYLFMLIVAGPVDL. A propeptide spanning residues 24–266 is cleaved from the precursor; the sequence is NENSEQKENV…VTDTPKRSRR (243 aa). Asparagine 71 carries N-linked (GlcNAc...) asparagine glycosylation. Cystine bridges form between cysteine 272-cysteine 282, cysteine 281-cysteine 340, cysteine 309-cysteine 372, and cysteine 313-cysteine 374.

Belongs to the TGF-beta family. As to quaternary structure, homodimer; disulfide-linked. Interacts with WFIKKN2, leading to inhibit its activity. Interacts with FSTL3. Synthesized as large precursor molecule that undergoes proteolytic cleavage to generate an N-terminal propeptide and a disulfide linked C-terminal dimer, which is the biologically active molecule. The circulating form consists of a latent complex of the C-terminal dimer and other proteins, including its propeptide, which maintain the C-terminal dimer in a latent, inactive state. Ligand activation requires additional cleavage of the prodomain by a tolloid-like metalloproteinase.

It localises to the secreted. In terms of biological role, acts specifically as a negative regulator of skeletal muscle growth. This Sus scrofa (Pig) protein is Growth/differentiation factor 8 (MSTN).